The sequence spans 408 residues: Lupus La protein (408 aa).

In terms of domain architecture, HTH La-type RNA-binding spans 7–99 (NEKMAALEAK…RRSPSKPLPE (93 aa)). Ser92 and Ser94 each carry phosphoserine. One can recognise an RRM domain in the interval 111–187 (RSVYIKGFPT…TDLLILFKDD (77 aa)). Position 116 is an N6-acetyllysine (Lys116). Thr120 bears the Phosphothreonine mark. Lys128 is subject to N6-acetyllysine. A Phosphoserine modification is found at Ser225. One can recognise a xRRM domain in the interval 227–348 (EEKIGCLLKF…KGKGNKAAQP (122 aa)). N6-acetyllysine is present on residues Lys328, Lys341, and Lys360. A compositionally biased stretch (basic residues) spans 329–342 (WKSKGRRFKGKGKG). Positions 329 to 408 (WKSKGRRFKG…QKTENGAGDQ (80 aa)) are disordered. Thr362 carries the post-translational modification Phosphothreonine. Ser366 carries the phosphoserine; by CK2 modification. The segment covering 384–395 (RAREETDKEEPA) has biased composition (basic and acidic residues).

In terms of assembly, interacts with DDX15. May interact with RUFY1. Phosphorylated. The phosphorylation sites are at the C-terminal part of the protein. Post-translationally, the N-terminus is blocked.

Its subcellular location is the nucleus. In terms of biological role, binds to the 3' poly(U) terminus of nascent RNA polymerase III transcripts, protecting them from exonuclease digestion and facilitating their folding and maturation. In case of Coxsackievirus B3 infection, binds to the viral internal ribosome entry site (IRES) and stimulates the IRES-mediated translation. This Homo sapiens (Human) protein is Lupus La protein (SSB).